The primary structure comprises 396 residues: Dimethyladenosine transferase 2, mitochondrial (396 aa).

The transit peptide at 1-19 directs the protein to the mitochondrion; it reads MWIPVVGLPRRLRLSALAG. The disordered stretch occupies residues 44–64; that stretch reads LSDSSPQLWPEPDFRNPPRKA. S-adenosyl-L-methionine-binding residues include valine 75, glutamate 124, and aspartate 150. The segment at 330-331 is DNA-binding; sequence RR.

It belongs to the class I-like SAM-binding methyltransferase superfamily. rRNA adenine N(6)-methyltransferase family. KsgA subfamily. In terms of assembly, homodimer. Component of the mitochondrial transcription initiation complex, composed at least of TFB2M, TFAM and POLRMT. In this complex TFAM recruits POLRMT to the promoter whereas TFB2M induces structural changes in POLRMT to enable promoter opening and trapping of the DNA non-template strand. Interacts with mitochondrial RNA polymerase POLRMT. Interacts with TFAM. Ubiquitously expressed.

It localises to the mitochondrion. The catalysed reaction is adenosine in rRNA + S-adenosyl-L-methionine = N(6)-methyladenosine in rRNA + S-adenosyl-L-homocysteine + H(+). Functionally, S-adenosyl-L-methionine-dependent rRNA methyltransferase which may methylate two specific adjacent adenosines in the loop of a conserved hairpin near the 3'-end of 12S mitochondrial rRNA. Component of the mitochondrial transcription initiation complex, composed at least of TFB2M, TFAM and POLRMT that is required for basal transcription of mitochondrial DNA. In this complex, TFAM recruits POLRMT to a specific promoter whereas TFB2M induces structural changes in POLRMT to enable promoter opening and trapping of the DNA non-template strand. Stimulates transcription independently of the methyltransferase activity. This Homo sapiens (Human) protein is Dimethyladenosine transferase 2, mitochondrial.